Here is a 543-residue protein sequence, read N- to C-terminus: MMDSSSKSLTQYIPSPMGSLSRLKQKGVDNFQKVKKSGKSIYNYNYSKFVPHPFSTIDESVKHSESGRYDDLEIIRPTKEKEVTSSVYKRNSGKSLNTESQFSLGDSDAATLVNSVATFKLNNASTSTSLVSSSSTVCSQAKSSLRSPTSRLNDTKIKEENNYISSVKDYCGPMRKSMVKTEILIEEPLNPTTDIKSFINSYNHGKAYSLGETQHLHYYQLPFPWRENRYIIHGYRFYNTHSKSLLSIFNWYGWHNETSNIWSHLLGAIYIIYLAIYDFPQSEVWRNSQVPPQARWIVFMFLAAALKCMLSSVFWHTFNGTSFLKLRSKFACVDYSGITILITASILTTEFVTMYSCYWAMYTYMSISLALGVFGVFMNWSPRFDRPEARPLRIRFFILLATMGVLSFLHLIFLTDLHYAATLFSPVTYKSVVWYLVGVVFYGSFIPERFRSDVQVDKTIPTNYELSTDLEIITKQREIHFREVPTAHSKCSSCPSHAKSFKSLWWVDYFGCSHTFWHFFVVLGVIGHYRAILDMFAKRWILS.

Over 1–259 (MMDSSSKSLT…NWYGWHNETS (259 aa)) the chain is Lumenal. Residues Asn45, Asn123, Asn153, and Asn256 are each glycosylated (N-linked (GlcNAc...) asparagine). The helical transmembrane segment at 260-280 (NIWSHLLGAIYIIYLAIYDFP) threads the bilayer. Topologically, residues 281-295 (QSEVWRNSQVPPQAR) are cytoplasmic. Residues 296 to 316 (WIVFMFLAAALKCMLSSVFWH) form a helical membrane-spanning segment. Over 317–330 (TFNGTSFLKLRSKF) the chain is Lumenal. An N-linked (GlcNAc...) asparagine glycan is attached at Asn319. A helical membrane pass occupies residues 331 to 353 (ACVDYSGITILITASILTTEFVT). Residues 354-357 (MYSC) lie on the Cytoplasmic side of the membrane. A helical transmembrane segment spans residues 358–378 (YWAMYTYMSISLALGVFGVFM). Over 379–395 (NWSPRFDRPEARPLRIR) the chain is Lumenal. A helical membrane pass occupies residues 396–416 (FFILLATMGVLSFLHLIFLTD). Residues 417–425 (LHYAATLFS) are Cytoplasmic-facing. A helical membrane pass occupies residues 426 to 446 (PVTYKSVVWYLVGVVFYGSFI). Topologically, residues 447-505 (PERFRSDVQVDKTIPTNYELSTDLEIITKQREIHFREVPTAHSKCSSCPSHAKSFKSLW) are lumenal. Residues 506–526 (WVDYFGCSHTFWHFFVVLGVI) form a helical membrane-spanning segment. The Cytoplasmic portion of the chain corresponds to 527–543 (GHYRAILDMFAKRWILS).

This sequence belongs to the ADIPOR family.

It localises to the endoplasmic reticulum membrane. In terms of biological role, ADIPOR-like receptor involved in zinc metabolism either by altering membrane sterol content or by directly altering cellular zinc levels. The sequence is that of ADIPOR-like receptor IZH3 (IZH3) from Saccharomyces cerevisiae (strain ATCC 204508 / S288c) (Baker's yeast).